The primary structure comprises 640 residues: Threonine--tRNA ligase (640 aa).

Positions 1–61 constitute a TGS domain; it reads MPTITLPDGS…ENDASLQIIT (61 aa). Residues 242 to 533 are catalytic; that stretch reads DHRKIGKRLG…LIEHYEGAFP (292 aa). Residues cysteine 333, histidine 384, and histidine 510 each coordinate Zn(2+).

It belongs to the class-II aminoacyl-tRNA synthetase family. In terms of assembly, homodimer. Zn(2+) serves as cofactor.

The protein localises to the cytoplasm. The catalysed reaction is tRNA(Thr) + L-threonine + ATP = L-threonyl-tRNA(Thr) + AMP + diphosphate + H(+). In terms of biological role, catalyzes the attachment of threonine to tRNA(Thr) in a two-step reaction: L-threonine is first activated by ATP to form Thr-AMP and then transferred to the acceptor end of tRNA(Thr). Also edits incorrectly charged L-seryl-tRNA(Thr). The sequence is that of Threonine--tRNA ligase from Pseudomonas syringae pv. syringae (strain B728a).